A 516-amino-acid chain; its full sequence is Bifunctional purine biosynthesis protein PurH (516 aa).

An MGS-like domain is found at Met-1–Ser-146.

This sequence belongs to the PurH family.

The catalysed reaction is (6R)-10-formyltetrahydrofolate + 5-amino-1-(5-phospho-beta-D-ribosyl)imidazole-4-carboxamide = 5-formamido-1-(5-phospho-D-ribosyl)imidazole-4-carboxamide + (6S)-5,6,7,8-tetrahydrofolate. It carries out the reaction IMP + H2O = 5-formamido-1-(5-phospho-D-ribosyl)imidazole-4-carboxamide. The protein operates within purine metabolism; IMP biosynthesis via de novo pathway; 5-formamido-1-(5-phospho-D-ribosyl)imidazole-4-carboxamide from 5-amino-1-(5-phospho-D-ribosyl)imidazole-4-carboxamide (10-formyl THF route): step 1/1. Its pathway is purine metabolism; IMP biosynthesis via de novo pathway; IMP from 5-formamido-1-(5-phospho-D-ribosyl)imidazole-4-carboxamide: step 1/1. This chain is Bifunctional purine biosynthesis protein PurH, found in Rippkaea orientalis (strain PCC 8801 / RF-1) (Cyanothece sp. (strain PCC 8801)).